A 349-amino-acid chain; its full sequence is Methylglutaconyl-CoA hydratase 1, mitochondrial (349 aa).

Residues 1 to 37 (MPPVSRILSYAPRVAIRPSSQLARPARAFAVGTVRYY) constitute a mitochondrion transit peptide.

This sequence belongs to the enoyl-CoA hydratase/isomerase family. Homohexamer.

Its subcellular location is the mitochondrion. It catalyses the reaction (3S)-3-hydroxy-3-methylglutaryl-CoA = 3-methyl-(2E)-glutaconyl-CoA + H2O. The protein operates within amino-acid degradation; L-leucine degradation; (S)-3-hydroxy-3-methylglutaryl-CoA from 3-isovaleryl-CoA: step 3/3. Its function is as follows. 3-methylglutaconyl-CoA hydratase that catalyzes the fifth step in the leucine degradation pathway, the reversible hydration of 3-methylglutaconyl-CoA (3-MG-CoA) to 3-hydroxy-3-methylglutaryl-CoA (HMG-CoA). Involved in vegetative growth, conidiation and in the stress response. Controls mitochondrial morphology and mitophagy, which are critical for the infectious growth of the pathogen. In Pyricularia oryzae (strain 70-15 / ATCC MYA-4617 / FGSC 8958) (Rice blast fungus), this protein is Methylglutaconyl-CoA hydratase 1, mitochondrial.